Consider the following 507-residue polypeptide: Ribonuclease Y (507 aa).

A helical transmembrane segment spans residues 1 to 21; it reads MLWYIVAGAGGLLIGYLIASY. The KH domain occupies 197–282; the sequence is TVSTVSLPSD…EMYEKAKQEV (86 aa). The region spanning 323–416 is the HD domain; it reads VLNHSIEVAL…VAAADALSAA (94 aa).

This sequence belongs to the RNase Y family.

It localises to the cell membrane. Functionally, endoribonuclease that initiates mRNA decay. This is Ribonuclease Y from Thermotoga petrophila (strain ATCC BAA-488 / DSM 13995 / JCM 10881 / RKU-1).